Here is a 51-residue protein sequence, read N- to C-terminus: Large ribosomal subunit protein bL33 (51 aa).

Residues 1 to 23 (MREKIKLESSAGTGHFYTTTKNK) form a disordered region. Positions 10–20 (SAGTGHFYTTT) are enriched in polar residues.

Belongs to the bacterial ribosomal protein bL33 family.

This Methylobacillus flagellatus (strain ATCC 51484 / DSM 6875 / VKM B-1610 / KT) protein is Large ribosomal subunit protein bL33.